The sequence spans 560 residues: DNA ligase B (560 aa).

K124 acts as the N6-AMP-lysine intermediate in catalysis.

Belongs to the NAD-dependent DNA ligase family. LigB subfamily.

The catalysed reaction is NAD(+) + (deoxyribonucleotide)n-3'-hydroxyl + 5'-phospho-(deoxyribonucleotide)m = (deoxyribonucleotide)n+m + AMP + beta-nicotinamide D-nucleotide.. In terms of biological role, catalyzes the formation of phosphodiester linkages between 5'-phosphoryl and 3'-hydroxyl groups in double-stranded DNA using NAD as a coenzyme and as the energy source for the reaction. The polypeptide is DNA ligase B (Escherichia coli O157:H7).